Reading from the N-terminus, the 444-residue chain is Glycine receptor subunit alphaZ1 (444 aa).

A signal peptide spans 1–24 (MFALGIYLWETIVFFSLAASQQAA). The Extracellular segment spans residues 25–246 (ARKAASPMPP…RFHLERQMGY (222 aa)). An N-linked (GlcNAc...) asparagine glycan is attached at N62. Positions 89 and 153 each coordinate glycine. A disulfide bridge links C162 with C176. Residues E216 and D218 each coordinate Zn(2+). An intrachain disulfide couples C222 to C233. 226-231 (YNTGKF) provides a ligand contact to strychnine. Residue T228 coordinates glycine. H239 contributes to the Zn(2+) binding site. The chain crosses the membrane as a helical span at residues 247–268 (YLIQMYIPSLLIVILSWVSFWI). At 269-273 (NMDAA) the chain is on the cytoplasmic side. Residues 274–294 (PARVGLGITTVLTMTTQSSGS) form a helical membrane-spanning segment. Over 295–305 (RASLPKVSYVK) the chain is Extracellular. A helical transmembrane segment spans residues 306 to 326 (AIDIWMAVCLLFVFSALLEYA). Over 327–412 (AVNFIARQHK…FISRAKRIDT (86 aa)) the chain is Cytoplasmic. Residues 413-433 (VSRVAFPLVFLIFNIFYWITY) form a helical membrane-spanning segment. Topologically, residues 434 to 444 (KIIRSEDIHKQ) are extracellular.

The protein belongs to the ligand-gated ion channel (TC 1.A.9) family. Glycine receptor (TC 1.A.9.3) subfamily. GLRA1 sub-subfamily. As to quaternary structure, homopentamer (in vitro). Heteropentamer composed of glra1 and glrb. Both homopentamers and heteropentamers form functional ion channels. Interacts with glrb. In terms of tissue distribution, expressed in brain.

The protein localises to the postsynaptic cell membrane. Its subcellular location is the synapse. It localises to the perikaryon. It is found in the cell projection. The protein resides in the dendrite. The protein localises to the cell membrane. The enzyme catalyses chloride(in) = chloride(out). Its activity is regulated as follows. Activated by glycine and taurine. Inhibited by strychnine. Allosterically activated by ivermectin. Inhibited by picrotoxinin. Strychnine binding locks the channel in a closed conformation and prevents channel opening in response to extracellular glycine. Can also be activated by GABA and inhibited by bicuculline, but this requires heterologous expression in human cells. Its function is as follows. Subunit of heteromeric glycine-gated chloride channels. Plays an important role in the down-regulation of neuronal excitability. Contributes to the generation of inhibitory postsynaptic currents. Channel activity is potentiated by ethanol. This chain is Glycine receptor subunit alphaZ1 (glra1), found in Danio rerio (Zebrafish).